The sequence spans 84 residues: DNA-directed RNA polymerase subunit Rpo5 (84 aa).

This sequence belongs to the archaeal Rpo5/eukaryotic RPB5 RNA polymerase subunit family. As to quaternary structure, part of the RNA polymerase complex.

The protein resides in the cytoplasm. The enzyme catalyses RNA(n) + a ribonucleoside 5'-triphosphate = RNA(n+1) + diphosphate. DNA-dependent RNA polymerase (RNAP) catalyzes the transcription of DNA into RNA using the four ribonucleoside triphosphates as substrates. This is DNA-directed RNA polymerase subunit Rpo5 from Saccharolobus islandicus (strain Y.N.15.51 / Yellowstone #2) (Sulfolobus islandicus).